A 472-amino-acid chain; its full sequence is MTIAIPFDNSYARLPGGFYTAQAPQPVRAPRLVAFNADLARLLGIAPGEVEEMAQVFAGNAVPQGAEPLAQLYSGHQFGNYNPQLGDGRAILLGEVLGSDGIRRDIQLKGAGRTPYSRGGDGRAWLGPVLREYVVSEAMAALGIPTTRALAAVETGETVRRESALPGAVLTRVAQSHLRVGTFQVFAARGEIAHLKRLTDYAIARHYPDAQGPMGLLAAVRDAQARLIARWMGVGFIHGVMNTDNSSIAGETIDYGPCAFMDTYHPDTVYSSIDRYGRYAYSNQPDIAVWNLAQLATALIQQAEDKEAVVEEATEIVHAMPELLERAWLEVFAAKIGIARPGEGDKALVSELLTRMAREQADFTNTFRALGAPRARDQFTDPTAYDSWAEDWRQRLTQEATPEAVIRAANPAFIPRNHRIEQMITAAVEGDYTLFERLNTVLARPYADQPDHIDLTRPPSASEIVPATFCGT.

The ATP site is built by Gly-86, Gly-88, Arg-89, Lys-109, Asp-121, Gly-122, Arg-172, and Arg-179. Asp-244 serves as the catalytic Proton acceptor. Residues Asn-245 and Asp-254 each coordinate Mg(2+). Asp-254 is a binding site for ATP.

This sequence belongs to the SELO family. Mg(2+) is required as a cofactor. Mn(2+) serves as cofactor.

It catalyses the reaction L-seryl-[protein] + ATP = 3-O-(5'-adenylyl)-L-seryl-[protein] + diphosphate. The catalysed reaction is L-threonyl-[protein] + ATP = 3-O-(5'-adenylyl)-L-threonyl-[protein] + diphosphate. The enzyme catalyses L-tyrosyl-[protein] + ATP = O-(5'-adenylyl)-L-tyrosyl-[protein] + diphosphate. It carries out the reaction L-histidyl-[protein] + UTP = N(tele)-(5'-uridylyl)-L-histidyl-[protein] + diphosphate. It catalyses the reaction L-seryl-[protein] + UTP = O-(5'-uridylyl)-L-seryl-[protein] + diphosphate. The catalysed reaction is L-tyrosyl-[protein] + UTP = O-(5'-uridylyl)-L-tyrosyl-[protein] + diphosphate. Its function is as follows. Nucleotidyltransferase involved in the post-translational modification of proteins. It can catalyze the addition of adenosine monophosphate (AMP) or uridine monophosphate (UMP) to a protein, resulting in modifications known as AMPylation and UMPylation. The chain is Protein nucleotidyltransferase YdiU from Ruegeria pomeroyi (strain ATCC 700808 / DSM 15171 / DSS-3) (Silicibacter pomeroyi).